Consider the following 1030-residue polypeptide: Translation initiation factor IF-2 (1030 aa).

Low complexity-rich tracts occupy residues 56–69 and 111–132; these read APSE…AADS and PNIV…APIK. 2 disordered regions span residues 56–361 and 394–434; these read APSE…KRRQ and SKPK…REQK. Residues 134–144 show a composition bias toward basic and acidic residues; that stretch reads ARPEKSAEKPE. Low complexity predominate over residues 154-164; that stretch reads AASAEPAKSPS. The span at 188 to 206 shows a compositional bias: basic and acidic residues; that stretch reads LLRKPEIVRRSEAKPERTS. Positions 259–273 are enriched in low complexity; it reads VAASASGVPAAASRV. Positions 522 to 695 constitute a tr-type G domain; that stretch reads TRPPVVTVMG…LLVTEVEELV (174 aa). Positions 531 to 538 are G1; sequence GHVDHGKT. 531–538 contributes to the GTP binding site; the sequence is GHVDHGKT. A G2 region spans residues 556–560; sequence GITQH. The segment at 581 to 584 is G3; it reads DTPG. Residues 581 to 585 and 635 to 638 each bind GTP; these read DTPGH and NKCD. The G4 stretch occupies residues 635 to 638; that stretch reads NKCD. Residues 671–673 form a G5 region; it reads SAI.

This sequence belongs to the TRAFAC class translation factor GTPase superfamily. Classic translation factor GTPase family. IF-2 subfamily.

It is found in the cytoplasm. Its function is as follows. One of the essential components for the initiation of protein synthesis. Protects formylmethionyl-tRNA from spontaneous hydrolysis and promotes its binding to the 30S ribosomal subunits. Also involved in the hydrolysis of GTP during the formation of the 70S ribosomal complex. This chain is Translation initiation factor IF-2, found in Synechococcus elongatus (strain ATCC 33912 / PCC 7942 / FACHB-805) (Anacystis nidulans R2).